The primary structure comprises 1597 residues: Rho guanine nucleotide exchange factor 5 (1597 aa).

Disordered stretches follow at residues 138 to 246 (PFSS…EGTL), 258 to 455 (EEQM…SLEP), and 467 to 1072 (GSFL…VFRE). S184 bears the Phosphoserine mark. Residues 192-204 (ETNQNEGSESGTI) are compositionally biased toward polar residues. Positions 217–237 (ESQGLLHPQEVQVLEEQGQQE) are enriched in low complexity. Over residues 266–278 (NDEKGEQKQKQEQ) the composition is skewed to basic and acidic residues. Over residues 299–309 (GLNDGEWEQED) the composition is skewed to acidic residues. 2 stretches are compositionally biased toward basic and acidic residues: residues 323-368 (GEER…KEKG) and 394-404 (RSREEENEHHG). The segment covering 428–438 (LMTQIPGTQTE) has biased composition (polar residues). Phosphoserine is present on residues S445 and S450. Basic and acidic residues predominate over residues 474-490 (SPDKEIDQNSQQEESRL). The span at 512 to 522 (PRTPDSAPPSP) shows a compositional bias: pro residues. 2 stretches are compositionally biased toward polar residues: residues 583 to 601 (STGT…TVQH) and 655 to 682 (DYST…NLER). A compositionally biased stretch (basic and acidic residues) spans 731 to 746 (QRRDTHPSVVETDGHA). Composition is skewed to pro residues over residues 812–828 (PLPP…PPIS) and 838–856 (PLPP…PLPP). R866 carries the post-translational modification Asymmetric dimethylarginine. The segment covering 901–920 (ATARSTESFTSTSRSKSEVS) has biased composition (low complexity). The segment covering 926 to 941 (SNMTNFLCPSSPTTPW) has biased composition (polar residues). Positions 950 to 969 (SKDEAGVSEHPEAPAREPLR) are enriched in basic and acidic residues. Residues S983, S1011, and S1044 each carry the phosphoserine modification. The span at 990 to 1012 (QPEKPSHLHLEKASSWPHRRDSG) shows a compositional bias: basic and acidic residues. Basic and acidic residues predominate over residues 1057 to 1072 (AVEKHPGPSDTVVFRE). Phosphoserine is present on S1126. Residues 1174–1358 (KLQEVKFELI…EQLIRDCNNN (185 aa)) form the DH domain. The region spanning 1390 to 1502 (WLVKSGELTA…WISALAMPRE (113 aa)) is the PH domain. Residues 1510 to 1571 (YNSPQVQCLR…PVQQVEFISN (62 aa)) form the SH3 domain.

In terms of assembly, interacts with SRC. Forms a ternary complex with SRC and the PI3K 85 kDa subunit. Interacts with and is activated by the heterodimer formed by GNB1 and GNG2. Interacts with ODAM (via C-terminus). Interacts with RHOA. In terms of processing, activation of SRC induces tyrosine phosphorylation of ARHGEF5. Ubiquitously expressed with highest levels in placenta. High levels are also found in colon, kidney, trachea, prostate, liver, pancreas, pituitary gland, thyroid gland and mammary gland. In fetal tissues, expressed at high levels in kidney, lung and liver. Expressed at low levels in lung and heart.

It localises to the cytoplasm. The protein localises to the nucleus. Its subcellular location is the cell projection. The protein resides in the podosome. Guanine nucleotide exchange factor which activates Rho GTPases. Strongly activates RHOA. Also strongly activates RHOB, weakly activates RHOC and RHOG and shows no effect on RHOD, RHOV, RHOQ or RAC1. Involved in regulation of cell shape and actin cytoskeletal organization. Plays a role in actin organization by generating a loss of actin stress fibers and the formation of membrane ruffles and filopodia. Required for SRC-induced podosome formation. Involved in positive regulation of immature dendritic cell migration. In Homo sapiens (Human), this protein is Rho guanine nucleotide exchange factor 5 (ARHGEF5).